We begin with the raw amino-acid sequence, 327 residues long: Clavesin-2 (327 aa).

Residues 96–257 (IKQALKDGFP…EFGGMLPPYD (162 aa)) form the CRAL-TRIO domain. Residues 288-327 (VDKELSPKSMKRSQSVVDPTALKRMDKSEEENMQPLLSLD) form a disordered region. At Ser325 the chain carries Phosphoserine.

Forms a complex with clathrin heavy chain and gamma-adaptin. As to expression, expressed in brain with no expression detected in non-neuronal tissues (at protein level).

It is found in the golgi apparatus. It localises to the trans-Golgi network membrane. The protein resides in the early endosome membrane. Its subcellular location is the cytoplasmic vesicle. The protein localises to the clathrin-coated vesicle. Functionally, required for normal morphology of late endosomes and/or lysosomes in neurons. Binds phosphatidylinositol 3,5-bisphosphate (PtdIns(3,5)P2). The protein is Clavesin-2 of Rattus norvegicus (Rat).